Consider the following 232-residue polypeptide: LOB domain-containing protein 11 (232 aa).

The disordered stretch occupies residues 1–50 (MLKMEINGGVATPTASAVAKVTETTTPVNSPSPTSSPPPPPSPQQPPQPP). Residues 34–50 (TSSPPPPPSPQQPPQPP) are compositionally biased toward pro residues. The 102-residue stretch at 54-155 (SPCAACKILR…AQLAKTQVEL (102 aa)) folds into the LOB domain. The disordered stretch occupies residues 181–218 (EQGQQKMSFESSFESGDEFISSPDEESNDLGFLEDNNN). Residues 188-202 (SFESSFESGDEFISS) show a composition bias toward low complexity.

The protein belongs to the LOB domain-containing protein family. In terms of tissue distribution, expressed in young shoots, stems, leaves and flowers.

This Arabidopsis thaliana (Mouse-ear cress) protein is LOB domain-containing protein 11 (LBD11).